The following is a 235-amino-acid chain: Ribonuclease 3 (235 aa).

The region spanning 6-131 is the RNase III domain; that stretch reads IDQLFKLTGH…LIAVMYLDGG (126 aa). Residue Glu44 participates in Mg(2+) binding. Asp48 is a catalytic residue. Residues Asp117 and Glu120 each contribute to the Mg(2+) site. Residue Glu120 is part of the active site. The DRBM domain maps to 156-225; the sequence is DAKTELQEWA…AEKILRREGV (70 aa).

This sequence belongs to the ribonuclease III family. Homodimer. It depends on Mg(2+) as a cofactor.

It localises to the cytoplasm. The enzyme catalyses Endonucleolytic cleavage to 5'-phosphomonoester.. Digests double-stranded RNA. Involved in the processing of primary rRNA transcript to yield the immediate precursors to the large and small rRNAs (23S and 16S). Processes some mRNAs, and tRNAs when they are encoded in the rRNA operon. Processes pre-crRNA and tracrRNA of type II CRISPR loci if present in the organism. This chain is Ribonuclease 3, found in Bartonella tribocorum (strain CIP 105476 / IBS 506).